Reading from the N-terminus, the 558-residue chain is Potassium-transporting ATPase potassium-binding subunit (558 aa).

12 consecutive transmembrane segments (helical) span residues 1 to 21 (MEII…SGYL), 66 to 86 (FNGF…WLFL), 127 to 147 (MIVM…VCIA), 166 to 186 (IVRF…ILLM), 245 to 265 (IWSN…MLFL), 281 to 301 (ALIL…LTMW), 327 to 347 (FGAG…TGSV), 354 to 374 (LTPI…VFGG), 377 to 397 (VGLM…SLMV), 416 to 436 (IVLV…LAFM), 482 to 502 (ISTG…QLMI), and 531 to 551 (IVFI…LGPI).

Belongs to the KdpA family. As to quaternary structure, the system is composed of three essential subunits: KdpA, KdpB and KdpC.

The protein resides in the cell membrane. Its function is as follows. Part of the high-affinity ATP-driven potassium transport (or Kdp) system, which catalyzes the hydrolysis of ATP coupled with the electrogenic transport of potassium into the cytoplasm. This subunit binds the extracellular potassium ions and delivers the ions to the membrane domain of KdpB through an intramembrane tunnel. This is Potassium-transporting ATPase potassium-binding subunit from Staphylococcus aureus (strain USA300).